Consider the following 487-residue polypeptide: Chromosomal replication initiator protein DnaA (487 aa).

The interval 1–79 (MPNSMWHQCL…QAPRVMMKVG (79 aa)) is domain I, interacts with DnaA modulators. Residues 78–138 (VGSAPKPTDP…PAPKAQAERR (61 aa)) are disordered. Residues 79–150 (GSAPKPTDPV…QVEGDIKHQS (72 aa)) are domain II. The domain III, AAA+ region stretch occupies residues 151-367 (FLNETFTFDT…GALRLVIANA (217 aa)). Gly195, Gly197, Lys198, and Thr199 together coordinate ATP. The interval 368-487 (HFTGSEITPP…YQNFMRLLTT (120 aa)) is domain IV, binds dsDNA.

This sequence belongs to the DnaA family. As to quaternary structure, oligomerizes as a right-handed, spiral filament on DNA at oriC.

The protein resides in the cytoplasm. In terms of biological role, plays an essential role in the initiation and regulation of chromosomal replication. ATP-DnaA binds to the origin of replication (oriC) to initiate formation of the DNA replication initiation complex once per cell cycle. Binds the DnaA box (a 9 base pair repeat at the origin) and separates the double-stranded (ds)DNA. Forms a right-handed helical filament on oriC DNA; dsDNA binds to the exterior of the filament while single-stranded (ss)DNA is stabiized in the filament's interior. The ATP-DnaA-oriC complex binds and stabilizes one strand of the AT-rich DNA unwinding element (DUE), permitting loading of DNA polymerase. After initiation quickly degrades to an ADP-DnaA complex that is not apt for DNA replication. Binds acidic phospholipids. The polypeptide is Chromosomal replication initiator protein DnaA (Marinobacter nauticus (strain ATCC 700491 / DSM 11845 / VT8) (Marinobacter aquaeolei)).